A 401-amino-acid chain; its full sequence is Subtilisin-like protease 7 (401 aa).

A signal peptide spans M1–G20. A propeptide spanning residues A21–N119 is cleaved from the precursor. In terms of domain architecture, Inhibitor I9 spans K36–I118. N58 is a glycosylation site (N-linked (GlcNAc...) asparagine). A Peptidase S8 domain is found at S129 to M401. Catalysis depends on charge relay system residues D161 and H193. 2 N-linked (GlcNAc...) asparagine glycosylation sites follow: N223 and N253. S347 functions as the Charge relay system in the catalytic mechanism. Residue N397 is glycosylated (N-linked (GlcNAc...) asparagine).

This sequence belongs to the peptidase S8 family.

It localises to the secreted. Secreted subtilisin-like serine protease with keratinolytic activity that contributes to pathogenicity. The chain is Subtilisin-like protease 7 (SUB7) from Trichophyton equinum (Horse ringworm fungus).